Here is a 38-residue protein sequence, read N- to C-terminus: Photosystem II reaction center protein X (38 aa).

Residues I9–I29 form a helical membrane-spanning segment.

It belongs to the PsbX family. Type 1 subfamily. PSII is composed of 1 copy each of membrane proteins PsbA, PsbB, PsbC, PsbD, PsbE, PsbF, PsbH, PsbI, PsbJ, PsbK, PsbL, PsbM, PsbT, PsbX, PsbY, PsbZ, Psb30/Ycf12, at least 3 peripheral proteins of the oxygen-evolving complex and a large number of cofactors. It forms dimeric complexes.

It localises to the plastid. The protein localises to the chloroplast thylakoid membrane. In terms of biological role, involved in the binding and/or turnover of quinones at the Q(B) site of photosystem II (PSII). PSII is a light-driven water plastoquinone oxidoreductase, using light energy to abstract electrons from H(2)O, generating a proton gradient subsequently used for ATP formation. This Phaeodactylum tricornutum (strain CCAP 1055/1) protein is Photosystem II reaction center protein X.